Here is an 85-residue protein sequence, read N- to C-terminus: U4-theraphotoxin-Hhn1i (85 aa).

Residues 1–22 (MKVTLIAILTCAAVLVLHTTAA) form the signal peptide. A propeptide spanning residues 23–48 (EELEAESQLMEVGMPDTELAAVDEER) is cleaved from the precursor. Intrachain disulfides connect cysteine 52-cysteine 66, cysteine 56-cysteine 77, and cysteine 71-cysteine 82.

The protein belongs to the neurotoxin 12 (Hwtx-2) family. 02 (Hwtx-2) subfamily. As to expression, expressed by the venom gland.

It is found in the secreted. Postsynaptic neurotoxin. The chain is U4-theraphotoxin-Hhn1i from Cyriopagopus hainanus (Chinese bird spider).